Consider the following 212-residue polypeptide: ATP-dependent dethiobiotin synthetase BioD (212 aa).

An ATP-binding site is contributed by 13-18 (GIGKTV). Residue Thr-17 coordinates Mg(2+). The active site involves Lys-33. Residue Ser-37 participates in substrate binding. Glu-100 is a Mg(2+) binding site. Residues 100-103 (EGAG) and 184-186 (PRL) contribute to the ATP site.

The protein belongs to the dethiobiotin synthetase family. Homodimer. The cofactor is Mg(2+).

The protein resides in the cytoplasm. It catalyses the reaction (7R,8S)-7,8-diammoniononanoate + CO2 + ATP = (4R,5S)-dethiobiotin + ADP + phosphate + 3 H(+). It participates in cofactor biosynthesis; biotin biosynthesis; biotin from 7,8-diaminononanoate: step 1/2. Catalyzes a mechanistically unusual reaction, the ATP-dependent insertion of CO2 between the N7 and N8 nitrogen atoms of 7,8-diaminopelargonic acid (DAPA, also called 7,8-diammoniononanoate) to form a ureido ring. This Agrobacterium fabrum (strain C58 / ATCC 33970) (Agrobacterium tumefaciens (strain C58)) protein is ATP-dependent dethiobiotin synthetase BioD.